An 83-amino-acid chain; its full sequence is Small ribosomal subunit protein bS16 (83 aa).

This sequence belongs to the bacterial ribosomal protein bS16 family.

This is Small ribosomal subunit protein bS16 from Pseudomonas putida (strain W619).